A 298-amino-acid polypeptide reads, in one-letter code: GTP cyclohydrolase FolE2 (298 aa).

The protein belongs to the GTP cyclohydrolase IV family.

It catalyses the reaction GTP + H2O = 7,8-dihydroneopterin 3'-triphosphate + formate + H(+). The protein operates within cofactor biosynthesis; 7,8-dihydroneopterin triphosphate biosynthesis; 7,8-dihydroneopterin triphosphate from GTP: step 1/1. In terms of biological role, converts GTP to 7,8-dihydroneopterin triphosphate. The polypeptide is GTP cyclohydrolase FolE2 (Azotobacter vinelandii (strain DJ / ATCC BAA-1303)).